The following is a 160-amino-acid chain: Cytochrome b6-f complex subunit 4 (160 aa).

The next 3 membrane-spanning stretches (helical) occupy residues 36–56 (LLYI…GLAI), 95–115 (LLGV…PFLE), and 131–151 (TVFL…TLPI).

The protein belongs to the cytochrome b family. PetD subfamily. In terms of assembly, the 4 large subunits of the cytochrome b6-f complex are cytochrome b6, subunit IV (17 kDa polypeptide, petD), cytochrome f and the Rieske protein, while the 4 small subunits are petG, petL, petM and petN. The complex functions as a dimer.

The protein localises to the plastid. The protein resides in the chloroplast thylakoid membrane. Functionally, component of the cytochrome b6-f complex, which mediates electron transfer between photosystem II (PSII) and photosystem I (PSI), cyclic electron flow around PSI, and state transitions. The protein is Cytochrome b6-f complex subunit 4 of Oenothera elata subsp. hookeri (Hooker's evening primrose).